Reading from the N-terminus, the 224-residue chain is ATP synthase subunit a (224 aa).

A run of 6 helical transmembrane segments spans residues 17–37 (LSLN…IYWL), 72–92 (IFIS…FPYI), 99–119 (LTLT…YGWI), 125–145 (MFAH…MVCI), 170–190 (LLLT…VTFL), and 195–215 (IALL…FAVL).

Belongs to the ATPase A chain family. In terms of assembly, F-type ATPases have 2 components, CF(1) - the catalytic core - and CF(0) - the membrane proton channel. CF(1) has five subunits: alpha(3), beta(3), gamma(1), delta(1), epsilon(1). CF(0) has three main subunits: a, b and c.

It is found in the mitochondrion inner membrane. Its function is as follows. Mitochondrial membrane ATP synthase (F(1)F(0) ATP synthase or Complex V) produces ATP from ADP in the presence of a proton gradient across the membrane which is generated by electron transport complexes of the respiratory chain. F-type ATPases consist of two structural domains, F(1) - containing the extramembraneous catalytic core and F(0) - containing the membrane proton channel, linked together by a central stalk and a peripheral stalk. During catalysis, ATP synthesis in the catalytic domain of F(1) is coupled via a rotary mechanism of the central stalk subunits to proton translocation. Key component of the proton channel; it may play a direct role in the translocation of protons across the membrane. This chain is ATP synthase subunit a (mt:ATPase6), found in Drosophila simulans (Fruit fly).